The sequence spans 305 residues: Acetyl-coenzyme A carboxylase carboxyl transferase subunit beta (305 aa).

Positions 27–296 (LWVKCSSCRE…SPAKAELAGR (270 aa)) constitute a CoA carboxyltransferase N-terminal domain. Cys31, Cys34, Cys50, and Cys53 together coordinate Zn(2+). The segment at 31–53 (CSSCRELIYKKQLNDNLKVCPKC) adopts a C4-type zinc-finger fold.

This sequence belongs to the AccD/PCCB family. In terms of assembly, acetyl-CoA carboxylase is a heterohexamer composed of biotin carboxyl carrier protein (AccB), biotin carboxylase (AccC) and two subunits each of ACCase subunit alpha (AccA) and ACCase subunit beta (AccD). The cofactor is Zn(2+).

The protein localises to the cytoplasm. The enzyme catalyses N(6)-carboxybiotinyl-L-lysyl-[protein] + acetyl-CoA = N(6)-biotinyl-L-lysyl-[protein] + malonyl-CoA. It functions in the pathway lipid metabolism; malonyl-CoA biosynthesis; malonyl-CoA from acetyl-CoA: step 1/1. Component of the acetyl coenzyme A carboxylase (ACC) complex. Biotin carboxylase (BC) catalyzes the carboxylation of biotin on its carrier protein (BCCP) and then the CO(2) group is transferred by the transcarboxylase to acetyl-CoA to form malonyl-CoA. In Chloroflexus aurantiacus (strain ATCC 29366 / DSM 635 / J-10-fl), this protein is Acetyl-coenzyme A carboxylase carboxyl transferase subunit beta.